The primary structure comprises 113 residues: Large ribosomal subunit protein bL20c (113 aa).

It belongs to the bacterial ribosomal protein bL20 family.

The protein resides in the plastid. It is found in the chloroplast. Its function is as follows. Binds directly to 23S ribosomal RNA and is necessary for the in vitro assembly process of the 50S ribosomal subunit. It is not involved in the protein synthesizing functions of that subunit. This chain is Large ribosomal subunit protein bL20c, found in Staurastrum punctulatum (Green alga).